Consider the following 801-residue polypeptide: Conserved oligomeric Golgi complex subunit 4 (801 aa).

Residues 397–427 (IRSPSGDGDDEENEEARQERHRLRKEAKEQK) are disordered.

The protein belongs to the COG4 family. Component of the conserved oligomeric Golgi complex which is composed of eight different subunits and is required for normal Golgi morphology and localization.

Its subcellular location is the golgi apparatus membrane. Functionally, required for normal Golgi function. In Caenorhabditis elegans, this protein is Conserved oligomeric Golgi complex subunit 4 (cogc-4).